A 127-amino-acid chain; its full sequence is Large ribosomal subunit protein bL17 (127 aa).

Belongs to the bacterial ribosomal protein bL17 family. In terms of assembly, part of the 50S ribosomal subunit. Contacts protein L32.

In Pelobacter propionicus (strain DSM 2379 / NBRC 103807 / OttBd1), this protein is Large ribosomal subunit protein bL17.